Consider the following 400-residue polypeptide: MATMISNLPRDLIEEIFSRVPLTSMKAVRLTCKSWNNLSKSESFTKVHIGRAATREEKTMIVDVMPHKLNLMSIVIDDVTPSAEFKGQFSLLHKNYRINQVLHYEGLLLCIMKDPTRIVVWNPYLGQTRWIQLRYFHRPHGIDHFRYALGYADKESCSSLKFLRFLDYFYKAPEEEFFWYEIYDFDSGLWTTLNVTPHWGIYSTCPCVSLKGNTYWPAKERSTQGFQDYIIRFDFTRERFGPLLALPTDRESSFVSLSCVKEEKLAALFKHRLHHDSYEYEFEIWITTKIEVEMVSWSKFLRMDMRPKMELPLTFYIDEEKKVFMGFDHGEYPKLLFLNVVGETGFLRKFENIQYRSPCSYVPSLVQVKKLARDRLRKQRSLENRRFAQNILRLARNGKS.

In terms of domain architecture, F-box spans 2–47; the sequence is ATMISNLPRDLIEEIFSRVPLTSMKAVRLTCKSWNNLSKSESFTKV.

This Arabidopsis thaliana (Mouse-ear cress) protein is Putative F-box protein At5g41510.